A 70-amino-acid chain; its full sequence is Large ribosomal subunit protein eL24 (70 aa).

Zn(2+)-binding residues include C7, C10, C33, and C37. The C4-type zinc finger occupies 7–37; it reads CSFCGYEIEPGKGKMVVEKDGTVLYFCSSKC.

Belongs to the eukaryotic ribosomal protein eL24 family. Part of the 50S ribosomal subunit. Forms a cluster with proteins L3 and L14. Requires Zn(2+) as cofactor.

In terms of biological role, binds to the 23S rRNA. This Methanocaldococcus jannaschii (strain ATCC 43067 / DSM 2661 / JAL-1 / JCM 10045 / NBRC 100440) (Methanococcus jannaschii) protein is Large ribosomal subunit protein eL24.